The chain runs to 309 residues: Glutaminase (309 aa).

Positions 64, 114, 160, 167, 191, 243, and 261 each coordinate substrate.

It belongs to the glutaminase family. In terms of assembly, homotetramer.

It carries out the reaction L-glutamine + H2O = L-glutamate + NH4(+). The chain is Glutaminase from Methylorubrum extorquens (strain CM4 / NCIMB 13688) (Methylobacterium extorquens).